The primary structure comprises 88 residues: Small ribosomal subunit protein bS16c (88 aa).

It belongs to the bacterial ribosomal protein bS16 family.

It is found in the plastid. Its subcellular location is the chloroplast. This Jasminum nudiflorum (Winter jasmine) protein is Small ribosomal subunit protein bS16c.